We begin with the raw amino-acid sequence, 417 residues long: Phosphoglycerate kinase 2 (417 aa).

The (2R)-3-phosphoglycerate site is built by Val23, Asp24, Phe25, Asn26, Asn38, Arg39, Ser62, His63, Gly65, Arg66, Leu121, Arg122, His168, and Arg169. Gly212 provides a ligand contact to ADP. Gly212 lines the CDP pocket. 2 residues coordinate AMP: Ala213 and Lys214. Ala213 is a binding site for ATP. Ala213 lines the Mg(2+) pocket. Asp217 contacts CDP. Asp217 lines the Mg(2+) pocket. Lys218 contacts AMP. Lys218 contributes to the ATP binding site. Gly236 contacts ADP. CDP is bound at residue Gly236. Gly237 and Gly312 together coordinate AMP. Residues Gly237 and Gly312 each contribute to the ATP site. Residues Gly337 and Phe342 each coordinate CDP. Phe342 is an ADP binding site. Glu343 is an AMP binding site. Residues Glu343, Asp374, and Thr375 each contribute to the ATP site. Asp374 contacts Mg(2+).

Belongs to the phosphoglycerate kinase family. As to quaternary structure, monomer. Requires Mg(2+) as cofactor.

It is found in the cytoplasm. It localises to the mitochondrion. It carries out the reaction (2R)-3-phosphoglycerate + ATP = (2R)-3-phospho-glyceroyl phosphate + ADP. Its pathway is carbohydrate degradation; glycolysis; pyruvate from D-glyceraldehyde 3-phosphate: step 2/5. Functionally, catalyzes one of the two ATP producing reactions in the glycolytic pathway via the reversible conversion of 1,3-diphosphoglycerate to 3-phosphoglycerate. Both L- and D- forms of purine and pyrimidine nucleotides can be used as substrates, but the activity is much lower on pyrimidines. Negatively regulates the biosynthesis of acetyl-CoA from pyruvate in the mitochondrion. This Rhizopus niveus protein is Phosphoglycerate kinase 2 (PGK2).